Consider the following 46-residue polypeptide: Phospholipase A2 superbin c (46 aa).

3 residues coordinate Ca(2+): Tyr28, Gly30, and Gly32. A disulfide bond links Cys29 and Cys45.

Ca(2+) serves as cofactor. Expressed by the venom gland.

It is found in the secreted. It carries out the reaction a 1,2-diacyl-sn-glycero-3-phosphocholine + H2O = a 1-acyl-sn-glycero-3-phosphocholine + a fatty acid + H(+). Its function is as follows. Snake venom phospholipase A2 (PLA2) that inhibits collagen-induced platelet aggregation. In terms of inhibition of platelet aggregation, superbin c is more potent as superbin d. PLA2 catalyzes the calcium-dependent hydrolysis of the 2-acyl groups in 3-sn-phosphoglycerides. This is Phospholipase A2 superbin c from Austrelaps superbus (Lowland copperhead snake).